The sequence spans 245 residues: tRNA pseudouridine synthase A (245 aa).

Asp-52 (nucleophile) is an active-site residue. Tyr-111 lines the substrate pocket.

Belongs to the tRNA pseudouridine synthase TruA family. Homodimer.

The enzyme catalyses uridine(38/39/40) in tRNA = pseudouridine(38/39/40) in tRNA. Formation of pseudouridine at positions 38, 39 and 40 in the anticodon stem and loop of transfer RNAs. This is tRNA pseudouridine synthase A from Rickettsia canadensis (strain McKiel).